The chain runs to 484 residues: tRNA sulfurtransferase (484 aa).

Residues 63-167 (QGIRERLSCM…DQRLFVVHDQ (105 aa)) form the THUMP domain. ATP is bound by residues 185–186 (LM), lysine 267, glycine 289, and glutamine 298. Cysteine 346 and cysteine 457 are oxidised to a cystine. The 79-residue stretch at 405–483 (ALAGQVILDI…GHANVRVYRP (79 aa)) folds into the Rhodanese domain. The active-site Cysteine persulfide intermediate is the cysteine 457.

Belongs to the ThiI family.

It localises to the cytoplasm. It carries out the reaction [ThiI sulfur-carrier protein]-S-sulfanyl-L-cysteine + a uridine in tRNA + 2 reduced [2Fe-2S]-[ferredoxin] + ATP + H(+) = [ThiI sulfur-carrier protein]-L-cysteine + a 4-thiouridine in tRNA + 2 oxidized [2Fe-2S]-[ferredoxin] + AMP + diphosphate. The catalysed reaction is [ThiS sulfur-carrier protein]-C-terminal Gly-Gly-AMP + S-sulfanyl-L-cysteinyl-[cysteine desulfurase] + AH2 = [ThiS sulfur-carrier protein]-C-terminal-Gly-aminoethanethioate + L-cysteinyl-[cysteine desulfurase] + A + AMP + 2 H(+). It participates in cofactor biosynthesis; thiamine diphosphate biosynthesis. Catalyzes the ATP-dependent transfer of a sulfur to tRNA to produce 4-thiouridine in position 8 of tRNAs, which functions as a near-UV photosensor. Also catalyzes the transfer of sulfur to the sulfur carrier protein ThiS, forming ThiS-thiocarboxylate. This is a step in the synthesis of thiazole, in the thiamine biosynthesis pathway. The sulfur is donated as persulfide by IscS. The protein is tRNA sulfurtransferase of Pseudomonas syringae pv. syringae (strain B728a).